Here is a 486-residue protein sequence, read N- to C-terminus: MLGKDYMLAIILVNCDDDLWGDQNLEGETGLPPGWRKIRDAAGTYYWHVPSGSTQWQRPTWELPGAEDPGRGTEGIWELRPPKGRSFSSLDSSLNRSNSLTWYSEDSYVRSLEPGAKCFAVRSLGWVEVPEEDLAPGKSSIAVNNCIQQLAQTRNRSQPHDGTWGEGQNMLMILKKDAMSLLNPLDHSLIHCQPLVHIRVWGVGSSKGRDRDFAFVAGDKDSCMLKCHVFHCDVPAKAIASALQGLCAQILSERVGVSGEAACCSPDPISPEDLPRQVELLDAVSQAAQKYEALYMGILPVTKAMGMDVLNEAIGTLTARGDRKTWVPAMLSVSDSLMTAHAIQAEAGAEEEPLWQCPVRLVTFIGVGRDPHTFGLIADLGCQSFQCAAFWCEPHAGGLSEAVQAACMVQYQKCLVASAARGKAWGAQARARLRLKRTSSMDSPGGPLPPPLLKGGAGGAGAAPRKRGVFSFLDAFRLKPSLLHMS.

The WW domain occupies Thr-29 to Trp-61. 2 PID domains span residues Glu-113 to Leu-280 and Ser-285 to Ser-440. The disordered stretch occupies residues Thr-438–Ala-460.

As to quaternary structure, interacts with APP (via intracellular domain). Interacts with APLP1 and APLP2 (via intracellular domain).

Its subcellular location is the cytoplasm. It localises to the nucleus. In terms of biological role, may modulate the internalization of amyloid-beta precursor protein. This is Amyloid-beta A4 precursor protein-binding family B member 3 from Mus musculus (Mouse).